The following is a 348-amino-acid chain: Holliday junction branch migration complex subunit RuvB (348 aa).

The interval 1–181 (MEERMITPQQ…FGVISRLEFY (181 aa)) is large ATPase domain (RuvB-L). ATP-binding residues include Leu-20, Arg-21, Gly-62, Lys-65, Thr-66, Thr-67, Arg-171, Tyr-181, and Arg-218. Thr-66 provides a ligand contact to Mg(2+). A small ATPAse domain (RuvB-S) region spans residues 182-252 (EVEDLIRIIT…LAGKSLDRLE (71 aa)). Residues 255–348 (PAGLDRIDQK…GDSLFDAAED (94 aa)) form a head domain (RuvB-H) region. Positions 310 and 315 each coordinate DNA. Residues 329-348 (VNSSHQEGGQGDSLFDAAED) form a disordered region.

This sequence belongs to the RuvB family. In terms of assembly, homohexamer. Forms an RuvA(8)-RuvB(12)-Holliday junction (HJ) complex. HJ DNA is sandwiched between 2 RuvA tetramers; dsDNA enters through RuvA and exits via RuvB. An RuvB hexamer assembles on each DNA strand where it exits the tetramer. Each RuvB hexamer is contacted by two RuvA subunits (via domain III) on 2 adjacent RuvB subunits; this complex drives branch migration. In the full resolvosome a probable DNA-RuvA(4)-RuvB(12)-RuvC(2) complex forms which resolves the HJ.

The protein resides in the cytoplasm. The enzyme catalyses ATP + H2O = ADP + phosphate + H(+). Its function is as follows. The RuvA-RuvB-RuvC complex processes Holliday junction (HJ) DNA during genetic recombination and DNA repair, while the RuvA-RuvB complex plays an important role in the rescue of blocked DNA replication forks via replication fork reversal (RFR). RuvA specifically binds to HJ cruciform DNA, conferring on it an open structure. The RuvB hexamer acts as an ATP-dependent pump, pulling dsDNA into and through the RuvAB complex. RuvB forms 2 homohexamers on either side of HJ DNA bound by 1 or 2 RuvA tetramers; 4 subunits per hexamer contact DNA at a time. Coordinated motions by a converter formed by DNA-disengaged RuvB subunits stimulates ATP hydrolysis and nucleotide exchange. Immobilization of the converter enables RuvB to convert the ATP-contained energy into a lever motion, pulling 2 nucleotides of DNA out of the RuvA tetramer per ATP hydrolyzed, thus driving DNA branch migration. The RuvB motors rotate together with the DNA substrate, which together with the progressing nucleotide cycle form the mechanistic basis for DNA recombination by continuous HJ branch migration. Branch migration allows RuvC to scan DNA until it finds its consensus sequence, where it cleaves and resolves cruciform DNA. In Desulfitobacterium hafniense (strain DSM 10664 / DCB-2), this protein is Holliday junction branch migration complex subunit RuvB.